Reading from the N-terminus, the 73-residue chain is Homeodomain-only protein (73 aa).

Positions 3 to 62 (AQTASGPTEDQVEILEYNFNKVNKHPDPTTLCLIAAEAGLTEEQTQKWFKQRLAEWRRSE) form a DNA-binding region, homeobox; degenerate.

As to quaternary structure, interacts with serum response factor (SRF). Component of a large complex containing histone deacetylases such as HDAC2. Interacts with the acetylated forms of HSPA1A and HSPA1B. Interacts with HSPA8. In terms of tissue distribution, expressed in the embryonic and adult heart and in the adult brain, liver, lung, skeletal muscle, intestine and spleen. Throughout embryonic and postnatal development, it is expressed in the myocardium.

The protein localises to the nucleus. It is found in the cytoplasm. Its function is as follows. Atypical homeodomain protein which does not bind DNA and is required to modulate cardiac growth and development. Acts via its interaction with SRF, thereby modulating the expression of SRF-dependent cardiac-specific genes and cardiac development. Prevents SRF-dependent transcription either by inhibiting SRF binding to DNA or by recruiting histone deacetylase (HDAC) proteins that prevent transcription by SRF. Overexpression causes cardiac hypertrophy. Acts as a co-chaperone for HSPA1A and HSPA1B chaperone proteins and assists in chaperone-mediated protein refolding. This Mus musculus (Mouse) protein is Homeodomain-only protein (Hopx).